A 494-amino-acid chain; its full sequence is Cytochrome P450 2A10 (494 aa).

Lys-379 is modified (N6-acetyllysine). Cys-439 provides a ligand contact to heme.

Belongs to the cytochrome P450 family. Heme serves as cofactor. In terms of tissue distribution, expressed in liver and lung as well as in nasal tissues.

It localises to the endoplasmic reticulum membrane. It is found in the microsome membrane. The catalysed reaction is an organic molecule + reduced [NADPH--hemoprotein reductase] + O2 = an alcohol + oxidized [NADPH--hemoprotein reductase] + H2O + H(+). Its function is as follows. Catalyzes the oxygenation of a variety of substrates, including ethanol and procarcinogens such as N-nitrosodiethylamine and phenacetin. Exhibits a high coumarin 7-hydroxylase activity. Converts also testosterone to androstenedione. This is Cytochrome P450 2A10 (CYP2A10) from Oryctolagus cuniculus (Rabbit).